A 349-amino-acid chain; its full sequence is Green-sensitive opsin-4 (349 aa).

Topologically, residues 1–36 are extracellular; sequence MNGTEGNNFYIPLSNRTGLARSPYEYPQYYLAEPWQ. Asn-2 and Asn-15 each carry an N-linked (GlcNAc...) asparagine glycan. A helical transmembrane segment spans residues 37–61; the sequence is FKLLAVYMFFLICLGFPINGLTLLV. Topologically, residues 62–73 are cytoplasmic; it reads TAQHKKLRQPLN. A helical membrane pass occupies residues 74-99; it reads FILVNLAVAGTIMVCFGFTVTFYTAI. Topologically, residues 100-113 are extracellular; the sequence is NGYFVLGPTGCAIE. Cysteines 110 and 187 form a disulfide. Residues 114 to 133 form a helical membrane-spanning segment; that stretch reads GFMATLGGEVALWSLVVLAV. Topologically, residues 134-152 are cytoplasmic; sequence ERYIVVCKPMGSFKFSASH. A helical transmembrane segment spans residues 153–176; that stretch reads AFAGCAFTWVMAMACAAPPLVGWS. Over 177 to 202 the chain is Extracellular; it reads RYIPEGMQCSCGPDYYTLNPEYNNES. N-linked (GlcNAc...) asparagine glycosylation occurs at Asn-200. The chain crosses the membrane as a helical span at residues 203–230; it reads YVLYMFICHFILPVTIIFFTYGRLVCTV. The Cytoplasmic portion of the chain corresponds to 231–252; that stretch reads KAAAAQQQESESTQKAEREVTR. Residues 253 to 276 form a helical membrane-spanning segment; sequence MVILMVLGFLIAWTPYATVAAWIF. Residues 277–284 are Extracellular-facing; the sequence is FNKGAAFS. A helical membrane pass occupies residues 285-309; the sequence is AQFMAVPAFFSKTSALYNPVIYVLL. An N6-(retinylidene)lysine modification is found at Lys-296. Residues 310–349 are Cytoplasmic-facing; the sequence is NKQFRNCMLTTLFCGKNPLGDDESSTVSTSKTEVSSVSPA. The segment at 329–349 is disordered; the sequence is GDDESSTVSTSKTEVSSVSPA. Residues 334 to 349 show a composition bias toward low complexity; sequence STVSTSKTEVSSVSPA.

It belongs to the G-protein coupled receptor 1 family. Opsin subfamily. Phosphorylated on some or all of the serine and threonine residues present in the C-terminal region. In terms of tissue distribution, retinal double cone accessory photoreceptor cell outer segments.

The protein localises to the membrane. In terms of biological role, visual pigments are the light-absorbing molecules that mediate vision. They consist of an apoprotein, opsin, covalently linked to cis-retinal. The sequence is that of Green-sensitive opsin-4 (opn1mw4) from Danio rerio (Zebrafish).